Consider the following 338-residue polypeptide: Trans-enoyl reductase fsr4 (338 aa).

65-68 (KDWK) lines the NADP(+) pocket. Position 147 to 153 (147 to 153 (AAFTAAC)) interacts with substrate. NADP(+) contacts are provided by residues 182 to 185 (SSAV), 205 to 208 (AGRA), tyrosine 227, and 277 to 278 (II).

It belongs to the zinc-containing alcohol dehydrogenase family.

Its function is as follows. Trans-enoyl reductase; part of the gene cluster that mediates the biosynthesis of fusarubins, highly pigmented naphthoquinones responsible for the coloration of the fruiting bodies. The non-reducing polyketide synthase FSR1 is responsible for the condensation of seven acetyl-CoA units to yield a haptaketide. After rings A and B are formed by aldol-type cyclization, the PKS-derived product is released as 6-O-demethylfusarubinaldehyde. Then, two hydroxyl groups at C-5 and C-10 are incorporated by FSR3, and simultaneously hydroxyl groups at C-6 and C-8 are methylated by FSR2. The aldehyde is, on the one hand, reduced by FSR3 to 8-O-methylfusarubin alcohol, which equilibrates mainly with 8-O-methylfusarubin and only small amounts of 8-O-methylnectriafurone. On the other hand, the aldehyde can be oxidized to form 8-O-methylfusarubinic acid, a reaction driven by FSR3 equilibrating with 8-O-methylfusarubinlactone, finally resulting in 8-O-methylanhydrofusarubinlactol after a further reduction step and loss of water. 8-O-Methylfusarubinic acid can also undergo decarboxylation, resulting in 8-O-methyl-13-hydroxynorjavanicin after another hydroxylation step at C-13. Both steps are most likely also accomplished by FSR3. No enzymatic function has been determined so far for either FSR4 and FSR5. Their deletion does not alter the product spectrum, but the possibility that they catalyze specific enzymatic steps during perithecium development cannot be ruled out. FSR4 might possess a regulatory function in the biosynthesis of fusarubins. The polypeptide is Trans-enoyl reductase fsr4 (Gibberella fujikuroi (strain CBS 195.34 / IMI 58289 / NRRL A-6831) (Bakanae and foot rot disease fungus)).